A 109-amino-acid polypeptide reads, in one-letter code: U-scoloptoxin(16)-Cw1a (109 aa).

Positions 1-21 (MNAVFIVFLSAILSYPHESFA) are cleaved as a signal peptide.

Belongs to the scoloptoxin-16 family. Post-translationally, contains 4 disulfide bonds. In terms of tissue distribution, expressed by the venom gland.

It is found in the secreted. In Cormocephalus westwoodi (Westwood's green centipede), this protein is U-scoloptoxin(16)-Cw1a.